The chain runs to 184 residues: Holliday junction branch migration complex subunit RuvA (184 aa).

The interval M1 to A61 is domain I. The domain II stretch occupies residues D62–Q135. Q135 is a region of interest (flexible linker). The segment at Q135 to K184 is domain III.

Belongs to the RuvA family. Homotetramer. Forms an RuvA(8)-RuvB(12)-Holliday junction (HJ) complex. HJ DNA is sandwiched between 2 RuvA tetramers; dsDNA enters through RuvA and exits via RuvB. An RuvB hexamer assembles on each DNA strand where it exits the tetramer. Each RuvB hexamer is contacted by two RuvA subunits (via domain III) on 2 adjacent RuvB subunits; this complex drives branch migration. In the full resolvosome a probable DNA-RuvA(4)-RuvB(12)-RuvC(2) complex forms which resolves the HJ.

The protein resides in the cytoplasm. Its function is as follows. The RuvA-RuvB-RuvC complex processes Holliday junction (HJ) DNA during genetic recombination and DNA repair, while the RuvA-RuvB complex plays an important role in the rescue of blocked DNA replication forks via replication fork reversal (RFR). RuvA specifically binds to HJ cruciform DNA, conferring on it an open structure. The RuvB hexamer acts as an ATP-dependent pump, pulling dsDNA into and through the RuvAB complex. HJ branch migration allows RuvC to scan DNA until it finds its consensus sequence, where it cleaves and resolves the cruciform DNA. The chain is Holliday junction branch migration complex subunit RuvA from Nautilia profundicola (strain ATCC BAA-1463 / DSM 18972 / AmH).